The primary structure comprises 300 residues: Transcription elongation factor A protein 2 (300 aa).

Residues 6–83 (EEIARIARRL…KSWKKLLDAS (78 aa)) enclose the TFIIS N-terminal domain. A Glycyl lysine isopeptide (Lys-Gly) (interchain with G-Cter in ubiquitin) cross-link involves residue Lys58. Phosphoserine is present on residues Ser60 and Ser101. Residues 84-131 (DAKARERRRGGSLPTSSSKEASEAQDPSRKRPELPRMPSTPRITTFPP) form a disordered region. Residues 103 to 117 (EASEAQDPSRKRPEL) are compositionally biased toward basic and acidic residues. The 117-residue stretch at 139-255 (VRTKCREMLT…EHQMARTGGT (117 aa)) folds into the TFIIS central domain. A TFIIS-type zinc finger spans residues 258-298 (DLFTCGKCRKKNCTYTQVQTRSSDEPMTTFVVCNECGNRWK). 4 residues coordinate Zn(2+): Cys262, Cys265, Cys290, and Cys293.

Belongs to the TFS-II family. In terms of assembly, interacts with the basal transcription factor GTF2B. Interacts with REXO1.

Its subcellular location is the nucleus. Its function is as follows. Necessary for efficient RNA polymerase II transcription elongation past template-encoded arresting sites. The arresting sites in DNA have the property of trapping a certain fraction of elongating RNA polymerases that pass through, resulting in locked ternary complexes. Cleavage of the nascent transcript by S-II allows the resumption of elongation from the new 3'-terminus. This Bos taurus (Bovine) protein is Transcription elongation factor A protein 2 (TCEA2).